Reading from the N-terminus, the 174-residue chain is Repair DNA polymerase X (174 aa).

The tract at residues 42–51 (REEKMLNDVD) is involved in ssDNA binding. Mg(2+) is bound by residues Asp49 and Asp51. Cys81 and Cys86 are joined by a disulfide. Asp100 provides a ligand contact to Mg(2+).

The protein belongs to the DNA polymerase type-X family. The cofactor is Mg(2+).

The protein localises to the virion. The enzyme catalyses DNA(n) + a 2'-deoxyribonucleoside 5'-triphosphate = DNA(n+1) + diphosphate. Its function is as follows. Error-prone polymerase lacking a proofreading 3'-5' exonuclease which catalyzes the gap-filling reaction during the DNA repair process. Specifically binds intermediates in the single-nucleotide base-excision repair process. Also catalyzes DNA polymerization with low nucleotide-insertion fidelity. Probably acts as a strategic DNA mutase, which gives rise to a rapid emergence of variants. Generates mismatched G-G pairs, in that case, the polymerase first binds the deoxynucleotide followed by mismatch formation. Together with the viral DNA ligase, fills the single nucleotide gaps generated by the AP endonuclease. Binds DNA with high affinity via the helix alphaE. The protein is Repair DNA polymerase X of African swine fever virus (isolate Tick/Malawi/Lil 20-1/1983) (ASFV).